The chain runs to 252 residues: Tricin synthase 1 (252 aa).

Residues S65, E87, 89–90 (GV), S95, and D113 each bind S-adenosyl-L-methionine. D168 serves as a coordination point for a divalent metal cation. D170 provides a ligand contact to S-adenosyl-L-methionine. Residues D194 and N195 each contribute to the a divalent metal cation site.

This sequence belongs to the class I-like SAM-binding methyltransferase superfamily. Cation-dependent O-methyltransferase family. CCoAMT subfamily. It depends on Mg(2+) as a cofactor. Mn(2+) serves as cofactor. The cofactor is Co(2+). As to expression, ubiquitous. Highest expression in stems and roots.

Its subcellular location is the nucleus. It catalyses the reaction tricetin + 2 S-adenosyl-L-methionine = 3',5'-di-O-methyltricetin + 2 S-adenosyl-L-homocysteine + 2 H(+). Its function is as follows. Catalyzes the stepwise methylation of tricetin to its 3'-mono- and 3',5'-dimethyl ethers. No 3',4',5'-trimethylated ester derivatives are produced. Can use caffeoyl-CoA, 5-hydroxyferulic acid, luteolin, tricetin, quercetin, myrcetin and 7,8-dihydroxyflavone as substrates, but not naringenin, apigenin or kaempferol. The 2,3-double bond and the O-dihydroxyl group of the substrate are both required for catalytic activity of the enzyme. The protein is Tricin synthase 1 (ROMT-15) of Oryza sativa subsp. japonica (Rice).